Here is a 350-residue protein sequence, read N- to C-terminus: Transcription factor MYB102 (350 aa).

2 HTH myb-type domains span residues Lys9 to Ile65 and Lys66 to Leu116. 2 consecutive DNA-binding regions (H-T-H motif) follow at residues Trp37 to Leu61 and Trp89 to Ile112.

As to expression, expressed in rosette leaves, cauline leaves and flowers.

Its subcellular location is the nucleus. Probable transcription factor that may function in osmotic stress and wounding signaling pathways. Contributes to basal resistance against the herbivore Pieris rapae (white cabbage butterfly) feeding. The sequence is that of Transcription factor MYB102 from Arabidopsis thaliana (Mouse-ear cress).